The primary structure comprises 253 residues: NADH-quinone oxidoreductase subunit C (253 aa).

Disordered stretches follow at residues 1–33 (MSPD…DTEP) and 234–253 (IPVE…RAYS).

The protein belongs to the complex I 30 kDa subunit family. In terms of assembly, NDH-1 is composed of 14 different subunits. Subunits NuoB, C, D, E, F, and G constitute the peripheral sector of the complex.

The protein localises to the cell membrane. It catalyses the reaction a quinone + NADH + 5 H(+)(in) = a quinol + NAD(+) + 4 H(+)(out). NDH-1 shuttles electrons from NADH, via FMN and iron-sulfur (Fe-S) centers, to quinones in the respiratory chain. The immediate electron acceptor for the enzyme in this species is believed to be a menaquinone. Couples the redox reaction to proton translocation (for every two electrons transferred, four hydrogen ions are translocated across the cytoplasmic membrane), and thus conserves the redox energy in a proton gradient. The sequence is that of NADH-quinone oxidoreductase subunit C from Nocardia farcinica (strain IFM 10152).